A 443-amino-acid polypeptide reads, in one-letter code: MESLASLYKNHIATLQERTRDALARFKLDALLIHSGELFNVFLDDHPYPFKVNPQFKAWVPVTQVPNCWLLVDGVNKPKLWFYLPVDYWHNVEPLPTSFWTEDVEVIALPKADGIGSLLPAARGNIGYIGPVPERALQLGIEASNINPKGVLDYLHYYRSFKTEYELACMREAQKMAVNGHRAAEEAFRSGMSEFDINIAYLTATGHRDTDVPYSNIVALNEHAAVLHYTKLDHQAPEEMYSFLLDAGAEYNGYAADLTRTWSAKSDNDYAQLVKDVNDEQLALIATMKAGVSYVDYHIQFHQRIAKLLRKHQIITDMSEEAMVENDLTGPFMPHGIGHPLGLQVHDVAGFMQDDSGTHLAAPAKYPYLRCTRILQPGMVLTIEPGIYFIESLLAPWREGQFSKHFNWQKIEALKPFGGIRIEDNVVIHENNVENMTRDLKLA.

Mn(2+) is bound by residues aspartate 246, aspartate 257, histidine 339, glutamate 384, and glutamate 423.

This sequence belongs to the peptidase M24B family. Bacterial-type prolidase subfamily. The cofactor is Mn(2+).

The enzyme catalyses Xaa-L-Pro dipeptide + H2O = an L-alpha-amino acid + L-proline. Functionally, splits dipeptides with a prolyl residue in the C-terminal position. This is Xaa-Pro dipeptidase from Escherichia coli O8 (strain IAI1).